The following is a 510-amino-acid chain: ETS translocation variant 5 (510 aa).

The interval 131 to 208 is disordered; sequence FKPLTPPTTP…QPLQMPKMMP (78 aa). Residues 161 to 174 are compositionally biased toward low complexity; the sequence is GHAPAAGPVQGVGP. Positions 175–185 are enriched in pro residues; the sequence is APAPHSLPEPG. Phosphoserine is present on Ser248. A Glycyl lysine isopeptide (Lys-Gly) (interchain with G-Cter in SUMO2) cross-link involves residue Lys350. The segment at residues 368–448 is a DNA-binding region (ETS); the sequence is LQLWQFLVTL…AGERYVYKFV (81 aa).

Interacts (via C-terminal) with ZMYM5 (via N-terminal 120 amino acid region). Ubiquitous.

The protein resides in the nucleus. Functionally, binds to DNA sequences containing the consensus nucleotide core sequence 5'-GGAA.-3'. This chain is ETS translocation variant 5 (ETV5), found in Homo sapiens (Human).